The primary structure comprises 96 residues: Ferredoxin (96 aa).

The 2Fe-2S ferredoxin-type domain maps to 4-94 (YKVKLLTPEG…DVVIETHKEE (91 aa)). [2Fe-2S] cluster-binding residues include Cys-40, Cys-45, Cys-48, and Cys-78.

Belongs to the 2Fe2S plant-type ferredoxin family. Requires [2Fe-2S] cluster as cofactor.

It is found in the plastid. Its subcellular location is the chloroplast. Ferredoxins are iron-sulfur proteins that transfer electrons in a wide variety of metabolic reactions. This is Ferredoxin from Panax ginseng (Korean ginseng).